The following is a 115-amino-acid chain: Protein V2 (115 aa).

The protein belongs to the geminiviridae protein AV2/V2 family. As to quaternary structure, interacts with host SGS3.

The protein localises to the host cytoplasm. The protein resides in the host perinuclear region. Through its interaction with host SGS3, acts as a suppressor of RNA-mediated gene silencing, also known as post-transcriptional gene silencing (PTGS), a mechanism of plant viral defense that limits the accumulation of viral RNAs. This Tomato yellow leaf curl Sardinia virus (TYLCSV) protein is Protein V2.